Consider the following 214-residue polypeptide: Putative germin-like protein 9-2 (214 aa).

An N-terminal signal peptide occupies residues 1–25 (MALSYYSLLLLLLAVWAPALTLVMA). N-linked (GlcNAc...) asparagine glycosylation is found at Asn44 and Asn60. The Cupin type-1 domain maps to 56-202 (RKVFNTSSAP…SFKTDVPTIL (147 aa)). His104, His106, Glu111, and His150 together coordinate Mn(2+).

The protein belongs to the germin family. As to quaternary structure, oligomer (believed to be a pentamer but probably hexamer).

The protein localises to the secreted. It localises to the extracellular space. It is found in the apoplast. Functionally, may play a role in plant defense. Probably has no oxalate oxidase activity even if the active site is conserved. This chain is Putative germin-like protein 9-2, found in Oryza sativa subsp. japonica (Rice).